A 1161-amino-acid polypeptide reads, in one-letter code: DNA-directed RNA polymerase subunit beta (1161 aa).

Belongs to the RNA polymerase beta chain family. The RNAP catalytic core consists of 2 alpha, 1 beta, 1 beta' and 1 omega subunit. When a sigma factor is associated with the core the holoenzyme is formed, which can initiate transcription. The RNAP complex including the principal sigma factor HrdB also interacts with RNA-binding protein RbpA.

It carries out the reaction RNA(n) + a ribonucleoside 5'-triphosphate = RNA(n+1) + diphosphate. DNA-dependent RNA polymerase catalyzes the transcription of DNA into RNA using the four ribonucleoside triphosphates as substrates. In Streptomyces coelicolor (strain ATCC BAA-471 / A3(2) / M145), this protein is DNA-directed RNA polymerase subunit beta.